Consider the following 487-residue polypeptide: Zinc finger and BTB domain-containing protein 32 (487 aa).

The region spanning 29–87 (CDTLITVGSQEFPAHSLVLAGVSQQLGRRGQWALGEGISPSTFAQLLNFVYGESVELQP) is the BTB domain. Residues 112–166 (ARGDRAKKPDPGLKKHQEEPEKPSRNPERELGDPGEKQKPEQVSRTGGREQEMLH) are compositionally biased toward basic and acidic residues. Disordered stretches follow at residues 112–244 (ARGD…TSVT) and 308–371 (QNQL…ARSR). The span at 308-320 (QNQLASSSPTPGS) shows a compositional bias: polar residues. Residues 357–369 (PPRPHPPPAPPAR) are compositionally biased toward pro residues. 3 consecutive C2H2-type zinc fingers follow at residues 373-395 (YACS…YRVH), 401-423 (FSCS…LRTH), and 428-450 (YRCS…MRGH). The tract at residues 468-487 (SSSRPSRPSTSPCCPSSSTT) is disordered.

The protein belongs to the krueppel C2H2-type zinc-finger protein family. Homodimer (via PTB domain). Interacts with the N-terminal of FANCC. Interacts with ZBTB16. Interacts with GATA3. Predominantly expressed in testis. Some isoforms are ubiquitously expressed.

It localises to the nucleus. In terms of biological role, DNA-binding protein that binds to the to a 5'-TGTACAGTGT-3' core sequence. May function as a transcriptional transactivator and transcriptional repressor. Probably exerts its repressor effect by preventing GATA3 from binding to DNA. May play a role in regulating the differentiation and activation of helper T-cells. This Homo sapiens (Human) protein is Zinc finger and BTB domain-containing protein 32 (ZBTB32).